Consider the following 152-residue polypeptide: MFDILVYLFENYFDTGNYPDSATLTRKLTMAGFDDEEITLALDWLSEFSHHDTEGYLAGLAESNSMRHFTKEEMEIIDTEGRGFIFFLEQAGVINPLQRELLIDRVIRMDGDTSSVEKIKLVVLFDLWIQNQLADSNTIEKLFVVSDSHQRH.

It belongs to the Smg family.

The chain is Protein Smg homolog from Nitrosomonas eutropha (strain DSM 101675 / C91 / Nm57).